We begin with the raw amino-acid sequence, 249 residues long: Caffeoyl-CoA O-methyltransferase (249 aa).

Lysine 21 contacts substrate. Residues threonine 63, glutamate 85, 87–88 (GV), serine 93, aspartate 111, and alanine 140 contribute to the S-adenosyl-L-methionine site. Aspartate 162 serves as a coordination point for substrate. Aspartate 162 contacts a divalent metal cation. Aspartate 164 serves as a coordination point for S-adenosyl-L-methionine. Residues aspartate 188 and asparagine 189 each coordinate a divalent metal cation. Asparagine 193 provides a ligand contact to substrate.

The protein belongs to the class I-like SAM-binding methyltransferase superfamily. Cation-dependent O-methyltransferase family. CCoAMT subfamily. As to quaternary structure, homodimer. It depends on a divalent metal cation as a cofactor.

It carries out the reaction (E)-caffeoyl-CoA + S-adenosyl-L-methionine = (E)-feruloyl-CoA + S-adenosyl-L-homocysteine + H(+). It participates in aromatic compound metabolism; phenylpropanoid biosynthesis. Methylates caffeoyl-CoA to feruloyl-CoA and 5-hydroxyferuloyl-CoA to sinapoyl-CoA. Plays a role in the synthesis of feruloylated polysaccharides. Involved in the reinforcement of the plant cell wall. Also involved in the responding to wounding or pathogen challenge by the increased formation of cell wall-bound ferulic acid polymers. In Eucalyptus gunnii (Cider gum), this protein is Caffeoyl-CoA O-methyltransferase.